Reading from the N-terminus, the 170-residue chain is Lipoprotein signal peptidase (170 aa).

3 consecutive transmembrane segments (helical) span residues 9 to 29, 72 to 92, and 94 to 114; these read FNIFVFIISLIFFDQLSKYLV, IFFLAMPIFILIFVFYLSLKE, and NCIARISLLLIFSGGVGNVID. Catalysis depends on residues Asp-124 and Asp-146. A helical transmembrane segment spans residues 143-163; that stretch reads NFADSYVVIGMILFLVYDFFI.

This sequence belongs to the peptidase A8 family.

Its subcellular location is the cell inner membrane. The catalysed reaction is Release of signal peptides from bacterial membrane prolipoproteins. Hydrolyzes -Xaa-Yaa-Zaa-|-(S,diacylglyceryl)Cys-, in which Xaa is hydrophobic (preferably Leu), and Yaa (Ala or Ser) and Zaa (Gly or Ala) have small, neutral side chains.. It participates in protein modification; lipoprotein biosynthesis (signal peptide cleavage). Functionally, this protein specifically catalyzes the removal of signal peptides from prolipoproteins. In Borreliella burgdorferi (strain ATCC 35210 / DSM 4680 / CIP 102532 / B31) (Borrelia burgdorferi), this protein is Lipoprotein signal peptidase.